An 869-amino-acid polypeptide reads, in one-letter code: Retrovirus-related Pol polyprotein from type-1 retrotransposable element R2 (869 aa).

The Reverse transcriptase domain occupies 199–475 (IFVFYGRVPS…DLWKYLGVVY (277 aa)). Residues 601-869 (LYASISHSCK…FNNVTTVVHW (269 aa)) form a nucleic acid-binding endonuclease region.

It catalyses the reaction DNA(n) + a 2'-deoxyribonucleoside 5'-triphosphate = DNA(n+1) + diphosphate. In Bradysia coprophila (Dark-winged fungus gnat), this protein is Retrovirus-related Pol polyprotein from type-1 retrotransposable element R2.